Here is a 316-residue protein sequence, read N- to C-terminus: Nucleoside diphosphate-linked moiety X motif 6 (316 aa).

The 133-residue stretch at 141–273 (SHQVGVAGAV…TSRVARLLLY (133 aa)) folds into the Nudix hydrolase domain. The Nudix box signature appears at 176 to 197 (GLSEPEEDIGDTAVREVFEETG).

Belongs to the Nudix hydrolase family. Monomer and homodimer. As to expression, detected in liver, kidney and esophagus (at protein level). Ubiquitous.

The protein localises to the cytoplasm. The protein resides in the nucleus. It localises to the mitochondrion. Its function is as follows. May contribute to the regulation of cell proliferation. The chain is Nucleoside diphosphate-linked moiety X motif 6 (NUDT6) from Homo sapiens (Human).